We begin with the raw amino-acid sequence, 539 residues long: Cell division control protein 6 homolog (539 aa).

Residues 1 to 40 (MPAIAGPSSSPQKHVVGSRSESIGGVRSAEVNTSRKRKLI) are disordered. The short motif at 35–38 (RKRK) is the Nuclear localization signal element.

The protein belongs to the CDC6/cdc18 family. As to expression, highly expressed in roots, flower buds and etiolated seedlings. Expressed in leaves and stems. Highly expressed in proliferating cells such as root meristems, leaf primordia and young growing leaves, as well as cells undergoing endoreduplication cycles.

Its subcellular location is the nucleus. May be involved in the initiation of DNA replication. May play a role in endoreduplication. Could act as one of the factors that contributes to maintain endoreduplication competence. This is Cell division control protein 6 homolog from Arabidopsis thaliana (Mouse-ear cress).